A 584-amino-acid chain; its full sequence is Transcriptional regulator STP2 (584 aa).

Composition is skewed to polar residues over residues 1–11 (MSVAITSNNNK) and 180–202 (AESN…SISD). Disordered regions lie at residues 1–22 (MSVA…PHLK) and 161–214 (KMHP…STVS). Low complexity predominate over residues 203–214 (SPSHSETESTVS). A C2H2-type zinc finger spans residues 225-247 (FKCPSCDAEFRVRGYLTRHMKKH). 2 disordered regions span residues 381–496 (RQKK…PQQP) and 553–584 (QYQP…SMYF). The segment covering 394 to 407 (SESSIQSQESESSI) has biased composition (low complexity). A compositionally biased stretch (basic residues) spans 431 to 441 (QHQHQHHHHVQ). Residues 442–480 (NQHQQHVNQQQSIATPASIYSSSASSTSSYESTHSPYTP) are compositionally biased toward low complexity. Positions 481–496 (QSSRSPLSHMYNPQQP) are enriched in polar residues.

In terms of processing, proteolytically cleaved: activated by the amino acid-induced proteolytic removal of an N-terminal inhibitory domain.

It localises to the cell membrane. The protein localises to the nucleus. In terms of biological role, transcription factor involved in the regulation of gene expression in response to extracellular amino acid levels. Synthesized as latent cytoplasmic precursor, which, upon a signal initiated by the plasma membrane SPS amino acid sensor system (including CSY1 and CSH3), becomes proteolytically activated and relocates to the nucleus, where it induces the expression of SPS-sensor-regulated genes. Required for efficient alkalinization through the release of ammonia from the cells produced during the breakdown of amino acids, and subsequent switch to the hyphal form. The protein is Transcriptional regulator STP2 (STP2) of Candida albicans (strain SC5314 / ATCC MYA-2876) (Yeast).